The following is a 295-amino-acid chain: uncharacterized protein (295 aa).

It belongs to the ROK (NagC/XylR) family.

This is an uncharacterized protein from Clostridium perfringens (strain 13 / Type A).